Consider the following 607-residue polypeptide: Replication factor C large subunit (607 aa).

ATP is bound at residue 55-62; that stretch reads GPAGIGKT. A disordered region spans residues 468–607; the sequence is EEEKPQKEGS…PKNQKTLFDF (140 aa). Basic and acidic residues predominate over residues 506–518; that stretch reads TSEKKENSEKKEN. The segment covering 548 to 558 has biased composition (polar residues); it reads SESVEQKTSSK.

It belongs to the activator 1 small subunits family. RfcL subfamily. As to quaternary structure, heteromultimer composed of small subunits (RfcS) and large subunits (RfcL).

In terms of biological role, part of the RFC clamp loader complex which loads the PCNA sliding clamp onto DNA. This Methanosarcina acetivorans (strain ATCC 35395 / DSM 2834 / JCM 12185 / C2A) protein is Replication factor C large subunit.